A 364-amino-acid polypeptide reads, in one-letter code: Phosphoserine aminotransferase (364 aa).

R42 serves as a coordination point for L-glutamate. Pyridoxal 5'-phosphate is bound by residues 76-77 (GR), W102, T156, D175, and Q198. Residue K199 is modified to N6-(pyridoxal phosphate)lysine. 240–241 (NT) provides a ligand contact to pyridoxal 5'-phosphate.

It belongs to the class-V pyridoxal-phosphate-dependent aminotransferase family. SerC subfamily. As to quaternary structure, homodimer. The cofactor is pyridoxal 5'-phosphate.

It localises to the cytoplasm. The enzyme catalyses O-phospho-L-serine + 2-oxoglutarate = 3-phosphooxypyruvate + L-glutamate. The catalysed reaction is 4-(phosphooxy)-L-threonine + 2-oxoglutarate = (R)-3-hydroxy-2-oxo-4-phosphooxybutanoate + L-glutamate. Its pathway is amino-acid biosynthesis; L-serine biosynthesis; L-serine from 3-phospho-D-glycerate: step 2/3. It participates in cofactor biosynthesis; pyridoxine 5'-phosphate biosynthesis; pyridoxine 5'-phosphate from D-erythrose 4-phosphate: step 3/5. Functionally, catalyzes the reversible conversion of 3-phosphohydroxypyruvate to phosphoserine and of 3-hydroxy-2-oxo-4-phosphonooxybutanoate to phosphohydroxythreonine. The sequence is that of Phosphoserine aminotransferase from Shewanella sediminis (strain HAW-EB3).